We begin with the raw amino-acid sequence, 252 residues long: MAGIDLNADLGEGFGVWRLGDDDAMLGIVSSANVACGFHAGDPAGLLRVCRSAAERGVRVGAQVSYRDLAGFGRRFIDVAADELLADVVYQIGALQAIAHAAGSSVCYVKPHGALYNTIVTHPAQAAAVAEAVRLVDPGLPVLGMAGSVFFDEAARRGLRVVAEAFADRAYRPDGRLVSRREPGAVLADPAAIAERVLAMVDTGAVTAVNGTRLELSVESVCVHGDSPGAVQIATAVRDRLRAAGVEIRAFC.

It belongs to the LamB/PxpA family. Forms a complex composed of PxpA, PxpB and PxpC.

The enzyme catalyses 5-oxo-L-proline + ATP + 2 H2O = L-glutamate + ADP + phosphate + H(+). In terms of biological role, catalyzes the cleavage of 5-oxoproline to form L-glutamate coupled to the hydrolysis of ATP to ADP and inorganic phosphate. This is 5-oxoprolinase subunit A from Mycolicibacterium paratuberculosis (strain ATCC BAA-968 / K-10) (Mycobacterium paratuberculosis).